The chain runs to 745 residues: Cytoskeleton-associated protein 2-like (745 aa).

Residues 25 to 141 are disordered; it reads AKGKLKSQNT…GELSRKPVGS (117 aa). A compositionally biased stretch (polar residues) spans 30-61; it reads KSQNTKPYLKSKNNCQNQPPSKSTIRPKNDVT. Residues 109–120 show a composition bias toward low complexity; sequence SSNPYSKPSSKS. Positions 121–133 are enriched in polar residues; it reads FQQCEAGSSTTGE. The KEN box signature appears at 185-187; sequence KEN. The span at 192-203 shows a compositional bias: basic and acidic residues; it reads LTEPERKPDPKL. 3 disordered regions span residues 192–217, 256–276, and 385–411; these read LTEPERKPDPKLYTRSKPKTDSYNQT, VKSQQLSRGADLARPGVKPSR, and RFNSAIPSTPSIRPNGTSGNKHNNNGF. Lysine 198 participates in a covalent cross-link: Glycyl lysine isopeptide (Lys-Gly) (interchain with G-Cter in SUMO1); alternate. A Glycyl lysine isopeptide (Lys-Gly) (interchain with G-Cter in SUMO2); alternate cross-link involves residue lysine 198. Tyrosine 204 bears the Phosphotyrosine mark. Over residues 389-411 the composition is skewed to polar residues; sequence AIPSTPSIRPNGTSGNKHNNNGF. Threonine 742 bears the Phosphothreonine mark. Serine 745 bears the Phosphoserine mark.

It belongs to the CKAP2 family. In terms of processing, ubiquitinated by the anaphase promoting complex/cyclosome (APC/C).

It is found in the cytoplasm. It localises to the cytoskeleton. The protein resides in the spindle pole. Functionally, microtubule-associated protein required for mitotic spindle formation and cell-cycle progression in neural progenitor cells. In Homo sapiens (Human), this protein is Cytoskeleton-associated protein 2-like (CKAP2L).